The sequence spans 496 residues: Glutamyl-tRNA(Gln) amidotransferase subunit A (496 aa).

Active-site charge relay system residues include Lys79 and Ser159. Residue Ser183 is the Acyl-ester intermediate of the active site.

This sequence belongs to the amidase family. GatA subfamily. Heterotrimer of A, B and C subunits.

It carries out the reaction L-glutamyl-tRNA(Gln) + L-glutamine + ATP + H2O = L-glutaminyl-tRNA(Gln) + L-glutamate + ADP + phosphate + H(+). Allows the formation of correctly charged Gln-tRNA(Gln) through the transamidation of misacylated Glu-tRNA(Gln) in organisms which lack glutaminyl-tRNA synthetase. The reaction takes place in the presence of glutamine and ATP through an activated gamma-phospho-Glu-tRNA(Gln). This Bartonella quintana (strain Toulouse) (Rochalimaea quintana) protein is Glutamyl-tRNA(Gln) amidotransferase subunit A.